The sequence spans 284 residues: NH(3)-dependent NAD(+) synthetase (284 aa).

41 to 48 serves as a coordination point for ATP; sequence GLSGGVDS. Aspartate 47 contributes to the Mg(2+) binding site. A deamido-NAD(+)-binding site is contributed by arginine 127. Threonine 147 lines the ATP pocket. Mg(2+) is bound at residue glutamate 152. Aspartate 167 is a deamido-NAD(+) binding site. ATP-binding residues include lysine 176 and serine 199. Residues 264 to 284 form a disordered region; sequence FKRRPAPGLDLPEPEDPAMSG. A compositionally biased stretch (acidic residues) spans 275–284; sequence PEPEDPAMSG.

It belongs to the NAD synthetase family. In terms of assembly, homodimer.

The enzyme catalyses deamido-NAD(+) + NH4(+) + ATP = AMP + diphosphate + NAD(+) + H(+). It functions in the pathway cofactor biosynthesis; NAD(+) biosynthesis; NAD(+) from deamido-NAD(+) (ammonia route): step 1/1. In terms of biological role, catalyzes the ATP-dependent amidation of deamido-NAD to form NAD. Uses ammonia as a nitrogen source. The protein is NH(3)-dependent NAD(+) synthetase of Methanopyrus kandleri (strain AV19 / DSM 6324 / JCM 9639 / NBRC 100938).